Consider the following 377-residue polypeptide: Geranylgeranyl transferase type-1 subunit beta (377 aa).

PFTB repeat units lie at residues 144 to 186 (KEAC…YMLN), 193 to 234 (MKKA…CLMG), 245 to 284 (LNRI…KLLK), and 291 to 333 (FEKN…SLME). Residues 219 to 221 (HGG) and 263 to 266 (RPNK) contribute to the geranylgeranyl diphosphate site. Zn(2+)-binding residues include Asp269 and Cys271. 272–275 (YSFW) provides a ligand contact to geranylgeranyl diphosphate. Residue His321 coordinates Zn(2+).

The protein belongs to the protein prenyltransferase subunit beta family. Heterodimer of FNTA and PGGT1B. PGGT1B mediates interaction with substrate peptides. Zn(2+) is required as a cofactor. Mg(2+) serves as cofactor.

It carries out the reaction geranylgeranyl diphosphate + L-cysteinyl-[protein] = S-geranylgeranyl-L-cysteinyl-[protein] + diphosphate. In terms of biological role, catalyzes the transfer of a geranyl-geranyl moiety from geranyl-geranyl pyrophosphate to a cysteine at the fourth position from the C-terminus of proteins having the C-terminal sequence Cys-aliphatic-aliphatic-X. Known substrates include RAC1, RAC2, RAP1A and RAP1B. In Homo sapiens (Human), this protein is Geranylgeranyl transferase type-1 subunit beta (PGGT1B).